The following is a 226-amino-acid chain: 2-C-methyl-D-erythritol 4-phosphate cytidylyltransferase (226 aa).

This sequence belongs to the IspD/TarI cytidylyltransferase family. IspD subfamily.

It catalyses the reaction 2-C-methyl-D-erythritol 4-phosphate + CTP + H(+) = 4-CDP-2-C-methyl-D-erythritol + diphosphate. The protein operates within isoprenoid biosynthesis; isopentenyl diphosphate biosynthesis via DXP pathway; isopentenyl diphosphate from 1-deoxy-D-xylulose 5-phosphate: step 2/6. Functionally, catalyzes the formation of 4-diphosphocytidyl-2-C-methyl-D-erythritol from CTP and 2-C-methyl-D-erythritol 4-phosphate (MEP). In Thermosipho africanus (strain TCF52B), this protein is 2-C-methyl-D-erythritol 4-phosphate cytidylyltransferase.